The primary structure comprises 295 residues: Putative xyloglucan endotransglucosylase/hydrolase protein 1 (295 aa).

Residues 1–24 (MNKMEYLSIFGFVSVLYLIIRVDA) form the signal peptide. In terms of domain architecture, GH16 spans 27-225 (YEVNGIDQSK…WSLAPFKANF (199 aa)). Glu-113 acts as the Nucleophile in catalysis. Glu-117 serves as the catalytic Proton donor. Residues Glu-117, 129–131 (QTN), and 139–141 (NRE) each bind xyloglucan. Asn-180 is a glycosylation site (N-linked (GlcNAc...) asparagine). Residues 204–205 (NW) and Gly-209 contribute to the xyloglucan site. Residues Asn-215 and Asn-229 are each glycosylated (N-linked (GlcNAc...) asparagine). Intrachain disulfides connect Cys-233-Cys-242 and Cys-278-Cys-291. Position 283 (Arg-283) interacts with xyloglucan.

It belongs to the glycosyl hydrolase 16 family. XTH group 1 subfamily. Post-translationally, contains at least one intrachain disulfide bond essential for its enzymatic activity.

It localises to the secreted. The protein localises to the cell wall. The protein resides in the extracellular space. Its subcellular location is the apoplast. It catalyses the reaction breaks a beta-(1-&gt;4) bond in the backbone of a xyloglucan and transfers the xyloglucanyl segment on to O-4 of the non-reducing terminal glucose residue of an acceptor, which can be a xyloglucan or an oligosaccharide of xyloglucan.. In terms of biological role, may catalyze xyloglucan endohydrolysis (XEH) and/or endotransglycosylation (XET). Cleaves and religates xyloglucan polymers, an essential constituent of the primary cell wall, and thereby participates in cell wall construction of growing tissues. The chain is Putative xyloglucan endotransglucosylase/hydrolase protein 1 (XTH1) from Arabidopsis thaliana (Mouse-ear cress).